The chain runs to 366 residues: MVIKFLSALILLLVTTAVQAERIRDLTSVQGVRQNSLIGYGLVVGLDGTGDQTTQTPFTTQTLNNMLSQLGITVPTGTNMQLKNVAAVMVTASLPPFGRQGQTIDVVVSSMGNAKSLRGGTLLMTPLKGVDSQVYALAQGNILVGGAGASAGGSSVQVNQLNGGRITNGAVIERELPSQFGVGNTLNLQLNDEDFSMAQQIADTINRVRGYGSATALDARTIQVRVPSGNSSQVRFLADIQNMQVNVTPQDAKVVINSRTGSVVMNREVTLDSCAVAQGNLSVTVNRQANVSQPDTPFGGGQTVVTPQTQIDLRQSGGSLQSVRSSASLNNVVRALNALGATPMDLMSILQSMQSAGCLRAKLEII.

The N-terminal stretch at 1–20 (MVIKFLSALILLLVTTAVQA) is a signal peptide.

This sequence belongs to the FlgI family. As to quaternary structure, the basal body constitutes a major portion of the flagellar organelle and consists of four rings (L,P,S, and M) mounted on a central rod.

Its subcellular location is the periplasm. The protein localises to the bacterial flagellum basal body. Functionally, assembles around the rod to form the L-ring and probably protects the motor/basal body from shearing forces during rotation. This is Flagellar P-ring protein from Escherichia coli O6:H1 (strain CFT073 / ATCC 700928 / UPEC).